The primary structure comprises 146 residues: MLALIQRVTRAAVTVDDQIVGQIGPGLLALIGVEPGDSDAQIRRLAERLLSYRVFGDDAGKMNRSLTDTGGGLLLVSQFTLAADTSSGNRPGFSTAAPPLEAEPAFNQLVAICREKHRGGVEAGRFGAHMVVDLVNDGPVTFLLRP.

The Gly-cisPro motif, important for rejection of L-amino acids motif lies at Gly138–Pro139.

It belongs to the DTD family. In terms of assembly, homodimer.

It is found in the cytoplasm. The catalysed reaction is glycyl-tRNA(Ala) + H2O = tRNA(Ala) + glycine + H(+). The enzyme catalyses a D-aminoacyl-tRNA + H2O = a tRNA + a D-alpha-amino acid + H(+). An aminoacyl-tRNA editing enzyme that deacylates mischarged D-aminoacyl-tRNAs. Also deacylates mischarged glycyl-tRNA(Ala), protecting cells against glycine mischarging by AlaRS. Acts via tRNA-based rather than protein-based catalysis; rejects L-amino acids rather than detecting D-amino acids in the active site. By recycling D-aminoacyl-tRNA to D-amino acids and free tRNA molecules, this enzyme counteracts the toxicity associated with the formation of D-aminoacyl-tRNA entities in vivo and helps enforce protein L-homochirality. The sequence is that of D-aminoacyl-tRNA deacylase from Xanthomonas euvesicatoria pv. vesicatoria (strain 85-10) (Xanthomonas campestris pv. vesicatoria).